The sequence spans 156 residues: Transcription antitermination protein NusB (156 aa).

It belongs to the NusB family.

Its function is as follows. Involved in transcription antitermination. Required for transcription of ribosomal RNA (rRNA) genes. Binds specifically to the boxA antiterminator sequence of the ribosomal RNA (rrn) operons. In Rickettsia massiliae (strain Mtu5), this protein is Transcription antitermination protein NusB.